The sequence spans 62 residues: Photosystem II reaction center protein Z (62 aa).

Transmembrane regions (helical) follow at residues 8–28 (FLIALVLFSLLMVIGVPVAYA) and 41–61 (YVGSAIWAILVVAVAILNFLV).

Belongs to the PsbZ family. As to quaternary structure, PSII is composed of 1 copy each of membrane proteins PsbA, PsbB, PsbC, PsbD, PsbE, PsbF, PsbH, PsbI, PsbJ, PsbK, PsbL, PsbM, PsbT, PsbX, PsbY, PsbZ, Psb30/Ycf12, peripheral proteins PsbO, CyanoQ (PsbQ), PsbU, PsbV and a large number of cofactors. It forms dimeric complexes.

Its subcellular location is the cellular thylakoid membrane. May control the interaction of photosystem II (PSII) cores with the light-harvesting antenna, regulates electron flow through the 2 photosystem reaction centers. PSII is a light-driven water plastoquinone oxidoreductase, using light energy to abstract electrons from H(2)O, generating a proton gradient subsequently used for ATP formation. The chain is Photosystem II reaction center protein Z from Microcystis aeruginosa (strain NIES-843 / IAM M-2473).